Consider the following 422-residue polypeptide: Enolase (422 aa).

Residue glutamine 161 participates in (2R)-2-phosphoglycerate binding. The active-site Proton donor is the glutamate 203. Residues aspartate 240, glutamate 283, and aspartate 310 each coordinate Mg(2+). Lysine 335, arginine 364, serine 365, and lysine 386 together coordinate (2R)-2-phosphoglycerate. The active-site Proton acceptor is lysine 335.

Belongs to the enolase family. Requires Mg(2+) as cofactor.

It localises to the cytoplasm. Its subcellular location is the secreted. The protein resides in the cell surface. The enzyme catalyses (2R)-2-phosphoglycerate = phosphoenolpyruvate + H2O. It functions in the pathway carbohydrate degradation; glycolysis; pyruvate from D-glyceraldehyde 3-phosphate: step 4/5. Its function is as follows. Catalyzes the reversible conversion of 2-phosphoglycerate (2-PG) into phosphoenolpyruvate (PEP). It is essential for the degradation of carbohydrates via glycolysis. This chain is Enolase, found in Deinococcus deserti (strain DSM 17065 / CIP 109153 / LMG 22923 / VCD115).